The chain runs to 347 residues: Probable RNA methyltransferase azo0122 (347 aa).

The active-site Proton acceptor is glutamate 89. One can recognise a Radical SAM core domain in the interval 92–318; that stretch reads LLLRDGLCVS…AKLRQSAGQD (227 aa). An intrachain disulfide couples cysteine 99 to cysteine 323. [4Fe-4S] cluster contacts are provided by cysteine 106, cysteine 110, and cysteine 113. S-adenosyl-L-methionine contacts are provided by residues 151–152, serine 181, 204–206, and asparagine 280; these read GE and SLH. Catalysis depends on cysteine 323, which acts as the S-methylcysteine intermediate.

Belongs to the radical SAM superfamily. RlmN family. Requires [4Fe-4S] cluster as cofactor.

It localises to the cytoplasm. This is Probable RNA methyltransferase azo0122 from Azoarcus sp. (strain BH72).